Reading from the N-terminus, the 149-residue chain is Large ribosomal subunit protein bL9 (149 aa).

The protein belongs to the bacterial ribosomal protein bL9 family.

In terms of biological role, binds to the 23S rRNA. The sequence is that of Large ribosomal subunit protein bL9 from Actinobacillus pleuropneumoniae serotype 3 (strain JL03).